Consider the following 334-residue polypeptide: Holliday junction branch migration complex subunit RuvB (334 aa).

The segment at 4–184 (ADRIISASPQ…FGIVQRLEFY (181 aa)) is large ATPase domain (RuvB-L). ATP-binding positions include Ile-23, Arg-24, Gly-65, Lys-68, Thr-69, Thr-70, 131 to 133 (EDY), Arg-174, Tyr-184, and Arg-221. Thr-69 is a binding site for Mg(2+). Positions 185–255 (NVDDLTSIVK…IAKQALVMLD (71 aa)) are small ATPAse domain (RuvB-S). The interval 258 to 334 (PQGFDFMDIK…YAHLGISLSE (77 aa)) is head domain (RuvB-H). Positions 294, 313, and 318 each coordinate DNA.

It belongs to the RuvB family. Homohexamer. Forms an RuvA(8)-RuvB(12)-Holliday junction (HJ) complex. HJ DNA is sandwiched between 2 RuvA tetramers; dsDNA enters through RuvA and exits via RuvB. An RuvB hexamer assembles on each DNA strand where it exits the tetramer. Each RuvB hexamer is contacted by two RuvA subunits (via domain III) on 2 adjacent RuvB subunits; this complex drives branch migration. In the full resolvosome a probable DNA-RuvA(4)-RuvB(12)-RuvC(2) complex forms which resolves the HJ.

It localises to the cytoplasm. It carries out the reaction ATP + H2O = ADP + phosphate + H(+). The RuvA-RuvB-RuvC complex processes Holliday junction (HJ) DNA during genetic recombination and DNA repair, while the RuvA-RuvB complex plays an important role in the rescue of blocked DNA replication forks via replication fork reversal (RFR). RuvA specifically binds to HJ cruciform DNA, conferring on it an open structure. The RuvB hexamer acts as an ATP-dependent pump, pulling dsDNA into and through the RuvAB complex. RuvB forms 2 homohexamers on either side of HJ DNA bound by 1 or 2 RuvA tetramers; 4 subunits per hexamer contact DNA at a time. Coordinated motions by a converter formed by DNA-disengaged RuvB subunits stimulates ATP hydrolysis and nucleotide exchange. Immobilization of the converter enables RuvB to convert the ATP-contained energy into a lever motion, pulling 2 nucleotides of DNA out of the RuvA tetramer per ATP hydrolyzed, thus driving DNA branch migration. The RuvB motors rotate together with the DNA substrate, which together with the progressing nucleotide cycle form the mechanistic basis for DNA recombination by continuous HJ branch migration. Branch migration allows RuvC to scan DNA until it finds its consensus sequence, where it cleaves and resolves cruciform DNA. In Haemophilus ducreyi (strain 35000HP / ATCC 700724), this protein is Holliday junction branch migration complex subunit RuvB.